The following is a 521-amino-acid chain: Cell cycle checkpoint protein hpr-9 (521 aa).

Disordered stretches follow at residues 1 to 20, 318 to 375, and 492 to 521; these read MQAIHENYTDNPSSSITRER, QHEE…NRFV, and GTETTSKMRMSQQFDKRLGPLVSDTQYESR. 2 stretches are compositionally biased toward polar residues: residues 355–370 and 493–504; these read ESLSQEETTRSQSLPS and TETTSKMRMSQQ.

It belongs to the rad9 family. Putative component of the toroidal 9-1-1 (RAD9-RAD1-HUS1) complex, composed of hpr-9, mrt-2 and hus-1.

Functionally, may be a component of the 9-1-1 cell-cycle checkpoint response complex that plays a major role in DNA repair. This chain is Cell cycle checkpoint protein hpr-9, found in Caenorhabditis elegans.